A 180-amino-acid chain; its full sequence is Inner membrane-spanning protein YciB (180 aa).

The next 6 helical transmembrane spans lie at 4 to 24 (LLSEIGPVIAFFAGFFYGGGI), 25 to 45 (QHATLYMLITSVICITLCYVI), 52 to 72 (LSIISTTVLLVSGSITLISGN), 76 to 96 (IKIKPTILYVIFGIIFLMSGI), 118 to 138 (ITLSYRTAAFFFFMAVVNEVV), and 150 to 170 (FKVFGVIPITVIFILLQLPLL).

The protein belongs to the YciB family.

It localises to the cell inner membrane. Its function is as follows. Plays a role in cell envelope biogenesis, maintenance of cell envelope integrity and membrane homeostasis. The sequence is that of Inner membrane-spanning protein YciB from Rickettsia massiliae (strain Mtu5).